We begin with the raw amino-acid sequence, 113 residues long: uncharacterized protein (113 aa).

Residues 1-19 are compositionally biased toward basic and acidic residues; it reads MDKKSAHRNPEDAKAGKYE. The segment at 1-94 is disordered; that stretch reads MDKKSAHRNP…NKWRGKRKVS (94 aa). A compositionally biased stretch (basic residues) spans 20–41; it reads GKHKRKKKRKQNQNQHRSRHRS. A compositionally biased stretch (low complexity) spans 52–66; sequence FPSSSSSSSGSQTDS. A compositionally biased stretch (basic residues) spans 75-92; the sequence is KIKKKRREKTNKWRGKRK.

This is an uncharacterized protein from Macaca fascicularis (Crab-eating macaque).